The chain runs to 36 residues: Serum amyloid P-component (36 aa).

The 31-residue stretch at 6-36 folds into the Pentraxin (PTX) domain; it reads SGKVFVIPMATSTSHVKLHARVSEPISAMTM.

This sequence belongs to the pentraxin family. Homopentamer. Discoid arrangement of 5 covalently bound subunits. Ca(2+) serves as cofactor.

The protein localises to the secreted. The polypeptide is Serum amyloid P-component (Salmo salar (Atlantic salmon)).